A 511-amino-acid polypeptide reads, in one-letter code: ATP synthase subunit alpha (511 aa).

Gly169–Thr176 is an ATP binding site.

Belongs to the ATPase alpha/beta chains family. In terms of assembly, F-type ATPases have 2 components, CF(1) - the catalytic core - and CF(0) - the membrane proton channel. CF(1) has five subunits: alpha(3), beta(3), gamma(1), delta(1), epsilon(1). CF(0) has three main subunits: a(1), b(2) and c(9-12). The alpha and beta chains form an alternating ring which encloses part of the gamma chain. CF(1) is attached to CF(0) by a central stalk formed by the gamma and epsilon chains, while a peripheral stalk is formed by the delta and b chains.

The protein localises to the cell inner membrane. The enzyme catalyses ATP + H2O + 4 H(+)(in) = ADP + phosphate + 5 H(+)(out). Produces ATP from ADP in the presence of a proton gradient across the membrane. The alpha chain is a regulatory subunit. The polypeptide is ATP synthase subunit alpha (Janthinobacterium sp. (strain Marseille) (Minibacterium massiliensis)).